We begin with the raw amino-acid sequence, 590 residues long: Aspartate--tRNA ligase (590 aa).

Residue Glu-172 coordinates L-aspartate. Positions 196 to 199 (QLFK) are aspartate. Arg-218 is a binding site for L-aspartate. Residues 218–220 (RDE) and Gln-227 each bind ATP. His-449 provides a ligand contact to L-aspartate. Glu-483 contributes to the ATP binding site. An L-aspartate-binding site is contributed by Arg-490. Residue 535–538 (GLDR) coordinates ATP.

The protein belongs to the class-II aminoacyl-tRNA synthetase family. Type 1 subfamily. As to quaternary structure, homodimer.

The protein localises to the cytoplasm. The enzyme catalyses tRNA(Asp) + L-aspartate + ATP = L-aspartyl-tRNA(Asp) + AMP + diphosphate. Functionally, catalyzes the attachment of L-aspartate to tRNA(Asp) in a two-step reaction: L-aspartate is first activated by ATP to form Asp-AMP and then transferred to the acceptor end of tRNA(Asp). The polypeptide is Aspartate--tRNA ligase (Mannheimia succiniciproducens (strain KCTC 0769BP / MBEL55E)).